The chain runs to 445 residues: Questin oxidase (445 aa).

This sequence belongs to the questin oxidase family. NADPH is required as a cofactor. Specifically expressed in conidia.

Its pathway is secondary metabolite biosynthesis. Its function is as follows. Questin oxidase; part of the gene cluster that mediates the biosynthesis of trypacidin, a mycotoxin with antiprotozoal activity and that plays a role in the infection process. The pathway begins with the synthesis of atrochrysone thioester by the polyketide synthase (PKS) tpcC. The atrochrysone carboxyl ACP thioesterase tpcB then breaks the thioester bond and releases the atrochrysone carboxylic acid from tpcC. The decarboxylase tpcK converts atrochrysone carboxylic acid to atrochrysone which is further reduced into emodin anthrone. The next step is performed by the emodin anthrone oxygenase tpcL that catalyzes the oxidation of emodinanthrone to emodin. Emodin O-methyltransferase encoded by tpcA catalyzes methylation of the 8-hydroxy group of emodin to form questin. Ring cleavage of questin by questin oxidase tpcI leads to desmethylsulochrin via several intermediates including questin epoxide. Another methylation step catalyzed by tpcM leads to the formation of sulochrin which is further converted to monomethylsulfochrin by tpcH. Finally, the tpcJ catalyzes the conversion of monomethylsulfochrin to trypacidin. Trypacidin is toxic for human pulmonary and bronchial epithelial cells by initiating the intracellular formation of nitric oxide (NO) and hydrogen peroxide (H(2)O(2)), thus triggering host necrotic cell death. The trypacidin pathway is also able to produce endocrocin via a distinct route from the endocrocin Enc pathway. In Aspergillus fumigatus (strain ATCC MYA-4609 / CBS 101355 / FGSC A1100 / Af293) (Neosartorya fumigata), this protein is Questin oxidase.